A 299-amino-acid chain; its full sequence is Ribonuclease 3-like protein 3 (299 aa).

One can recognise an RNase III domain in the interval 39–183; that stretch reads VAAVESLLGY…LIGAIYCDSN (145 aa). Mg(2+)-binding residues include Glu79, Asp169, and Glu172. One can recognise a DRBM domain in the interval 209–273; the sequence is HPVSELFEFC…AKAALDKLKE (65 aa). Residues 274 to 299 form a disordered region; the sequence is TLGQSQTEPMSAEVSEQFNKIDLTGS. Residues 275–291 are compositionally biased toward polar residues; sequence LGQSQTEPMSAEVSEQF.

The cofactor is Mg(2+). Mn(2+) serves as cofactor.

Cleaves double-stranded RNA (dsRNA). This chain is Ribonuclease 3-like protein 3, found in Oryza sativa subsp. japonica (Rice).